A 114-amino-acid polypeptide reads, in one-letter code: SCP2 domain-containing protein YusD (114 aa).

Residues 21 to 101 (NASTLLITFQ…RALLKLEAIL (81 aa)) form the SCP2 domain.

This is SCP2 domain-containing protein YusD (yusD) from Bacillus subtilis (strain 168).